Reading from the N-terminus, the 244-residue chain is DNA polymerase sliding clamp (244 aa).

The protein belongs to the PCNA family. In terms of assembly, homotrimer. The subunits circularize to form a toroid; DNA passes through its center. Replication factor C (RFC) is required to load the toroid on the DNA.

Sliding clamp subunit that acts as a moving platform for DNA processing. Responsible for tethering the catalytic subunit of DNA polymerase and other proteins to DNA during high-speed replication. The polypeptide is DNA polymerase sliding clamp (Methanobrevibacter smithii (strain ATCC 35061 / DSM 861 / OCM 144 / PS)).